Consider the following 137-residue polypeptide: NADPH-dependent 7-cyano-7-deazaguanine reductase (137 aa).

Residue cysteine 45 is the Thioimide intermediate of the active site. Residue aspartate 52 is the Proton donor of the active site. Residues valine 68–leucine 70 and glutamine 87–glutamate 88 each bind substrate.

This sequence belongs to the GTP cyclohydrolase I family. QueF type 1 subfamily.

It is found in the cytoplasm. It carries out the reaction 7-aminomethyl-7-carbaguanine + 2 NADP(+) = 7-cyano-7-deazaguanine + 2 NADPH + 3 H(+). The protein operates within tRNA modification; tRNA-queuosine biosynthesis. Functionally, catalyzes the NADPH-dependent reduction of 7-cyano-7-deazaguanine (preQ0) to 7-aminomethyl-7-deazaguanine (preQ1). In Thermotoga petrophila (strain ATCC BAA-488 / DSM 13995 / JCM 10881 / RKU-1), this protein is NADPH-dependent 7-cyano-7-deazaguanine reductase.